The sequence spans 829 residues: Receptor-type tyrosine-protein phosphatase alpha (829 aa).

A signal peptide spans methionine 1–alanine 19. Residues asparagine 20–proline 142 are Extracellular-facing. Asparagine 21, asparagine 47, asparagine 51, asparagine 68, asparagine 80, asparagine 86, asparagine 104, and asparagine 124 each carry an N-linked (GlcNAc...) asparagine glycan. A disordered region spans residues valine 79–serine 106. The chain crosses the membrane as a helical span at residues isoleucine 143 to leucine 166. Over arginine 167–lysine 829 the chain is Cytoplasmic. 2 positions are modified to phosphoserine: serine 202 and serine 204. 2 consecutive Tyrosine-protein phosphatase domains span residues phenylalanine 232 to histidine 528 and leucine 560 to tyrosine 818. Residues aspartate 437, cysteine 469–arginine 475, and glutamine 513 contribute to the substrate site. Cysteine 469 functions as the Phosphocysteine intermediate in the catalytic mechanism. Residue cysteine 759 is the Phosphocysteine intermediate of the active site. Tyrosine 825 is subject to Phosphotyrosine.

Belongs to the protein-tyrosine phosphatase family. Receptor class 4 subfamily. In terms of assembly, part of a complex comprised of PTPRA, BCAR1, BCAR3 (via SH2 domain), and SRC. Within the complex, interacts (when phosphorylated on Tyr-825) with BCAR3 (via SH2 domain). Interacts with GRB2. Integrin binding to extracellular matrix induces phosphorylation at Tyr-825 which induces PTPRA localization and recruitment of BCAR3, BCAR1 and CRK to focal adhesions. As to expression, widely expressed. Highest expression in brain and kidney.

It localises to the cell membrane. It is found in the cell junction. The protein resides in the focal adhesion. The catalysed reaction is O-phospho-L-tyrosyl-[protein] + H2O = L-tyrosyl-[protein] + phosphate. In terms of biological role, tyrosine protein phosphatase which is involved in integrin-mediated focal adhesion formation. Following integrin engagement, specifically recruits BCAR3, BCAR1 and CRK to focal adhesions thereby promoting SRC-mediated phosphorylation of BRAC1 and the subsequent activation of PAK and small GTPase RAC1 and CDC42. The protein is Receptor-type tyrosine-protein phosphatase alpha (Ptpra) of Mus musculus (Mouse).